The primary structure comprises 411 residues: Ferrochelatase, mitochondrial (411 aa).

Residues 1–41 constitute a mitochondrion transit peptide; sequence MAAFRAAHRLLGHILRNESSAGLVTQRWSSSAAVASVPKSS. The segment at 34-55 is disordered; it reads VASVPKSSDPKPHAQPDKRKPK. Basic and acidic residues predominate over residues 41–51; sequence SDPKPHAQPDK. Protoporphyrin IX is bound by residues arginine 102, tyrosine 110, and serine 117. Cysteine 183 serves as a coordination point for [2Fe-2S] cluster. Active-site residues include histidine 217 and aspartate 370. [2Fe-2S] cluster contacts are provided by cysteine 390, cysteine 393, and cysteine 398.

The protein belongs to the ferrochelatase family. As to quaternary structure, homodimer. Homotetramer. The cofactor is [2Fe-2S] cluster.

The protein resides in the mitochondrion inner membrane. It carries out the reaction heme b + 2 H(+) = protoporphyrin IX + Fe(2+). Its pathway is porphyrin-containing compound metabolism; protoheme biosynthesis; protoheme from protoporphyrin-IX: step 1/1. Functionally, catalyzes the ferrous insertion into protoporphyrin IX. This Xenopus laevis (African clawed frog) protein is Ferrochelatase, mitochondrial.